Here is a 129-residue protein sequence, read N- to C-terminus: Large ribosomal subunit protein uL22 (129 aa).

This sequence belongs to the universal ribosomal protein uL22 family. In terms of assembly, part of the 50S ribosomal subunit.

Functionally, this protein binds specifically to 23S rRNA; its binding is stimulated by other ribosomal proteins, e.g. L4, L17, and L20. It is important during the early stages of 50S assembly. It makes multiple contacts with different domains of the 23S rRNA in the assembled 50S subunit and ribosome. The globular domain of the protein is located near the polypeptide exit tunnel on the outside of the subunit, while an extended beta-hairpin is found that lines the wall of the exit tunnel in the center of the 70S ribosome. The polypeptide is Large ribosomal subunit protein uL22 (Rhizobium etli (strain ATCC 51251 / DSM 11541 / JCM 21823 / NBRC 15573 / CFN 42)).